A 395-amino-acid chain; its full sequence is E3 ubiquitin-protein ligase RNFT1 (395 aa).

Disordered stretches follow at residues 1 to 58 (MQAS…SSRN) and 78 to 97 (YSHS…GEHG). The next 6 helical transmembrane spans lie at 118–138 (ILIL…LGIG), 165–185 (CAWL…TFHS), 193–213 (IFLN…IVGI), 216–236 (FILK…PSFI), 258–278 (IFVP…FGNV), and 283–303 (LGIL…FGHL). A required for ubiquitin ligase activity and for protection against ER stress-induced cell death region spans residues 328–379 (CSDMDGICTICQAEFQKPVLLFCQHIFCEECITLWFNREKTCPLCRTVISEC). The RING-type zinc finger occupies 335-373 (CTICQAEFQKPVLLFCQHIFCEECITLWFNREKTCPLCR).

In terms of tissue distribution, predominantly expressed in testis.

It is found in the early endosome membrane. It catalyses the reaction S-ubiquitinyl-[E2 ubiquitin-conjugating enzyme]-L-cysteine + [acceptor protein]-L-lysine = [E2 ubiquitin-conjugating enzyme]-L-cysteine + N(6)-ubiquitinyl-[acceptor protein]-L-lysine.. It functions in the pathway protein modification; protein ubiquitination. Its function is as follows. E3 ubiquitin-protein ligase that acts in the endoplasmic reticulum (ER)-associated degradation (ERAD) pathway, which targets misfolded proteins that accumulate in the endoplasmic reticulum (ER) for ubiquitination and subsequent proteasome-mediated degradation. Protects cells from ER stress-induced apoptosis. The sequence is that of E3 ubiquitin-protein ligase RNFT1 (Rnft1) from Mus musculus (Mouse).